A 342-amino-acid polypeptide reads, in one-letter code: 4-hydroxythreonine-4-phosphate dehydrogenase (342 aa).

Positions 139 and 140 each coordinate substrate. A divalent metal cation is bound by residues His174, His219, and His274. Substrate-binding residues include Lys282, Asn291, and Arg300.

It belongs to the PdxA family. As to quaternary structure, homodimer. The cofactor is Zn(2+). Mg(2+) is required as a cofactor. Co(2+) serves as cofactor.

The protein resides in the cytoplasm. The catalysed reaction is 4-(phosphooxy)-L-threonine + NAD(+) = 3-amino-2-oxopropyl phosphate + CO2 + NADH. It participates in cofactor biosynthesis; pyridoxine 5'-phosphate biosynthesis; pyridoxine 5'-phosphate from D-erythrose 4-phosphate: step 4/5. Its function is as follows. Catalyzes the NAD(P)-dependent oxidation of 4-(phosphooxy)-L-threonine (HTP) into 2-amino-3-oxo-4-(phosphooxy)butyric acid which spontaneously decarboxylates to form 3-amino-2-oxopropyl phosphate (AHAP). The sequence is that of 4-hydroxythreonine-4-phosphate dehydrogenase from Mesorhizobium japonicum (strain LMG 29417 / CECT 9101 / MAFF 303099) (Mesorhizobium loti (strain MAFF 303099)).